A 153-amino-acid polypeptide reads, in one-letter code: Antibacterial peptide PMAP-23 (153 aa).

The N-terminal stretch at 1 to 29 (METQRASLCLGRWSLWLLLLGLVVPSASA) is a signal peptide. Q30 carries the post-translational modification Pyrrolidone carboxylic acid. Positions 30–130 (QALSYREAVL…DITCNQLQSV (101 aa)) are excised as a propeptide. The disordered stretch occupies residues 61 to 80 (DQPPKADEDPGTPKPVSFTV). Disulfide bonds link C85/C96 and C107/C124.

Belongs to the cathelicidin family.

Its subcellular location is the secreted. In terms of biological role, exerts antimicrobial activity against both Gram-positive and negative bacteria at concentrations of 2-16 micro molar. Its activity appears to be mediated by its ability to damage bacterial membranes. This chain is Antibacterial peptide PMAP-23 (PMAP23), found in Sus scrofa (Pig).